The primary structure comprises 332 residues: MKFGIEFVPDMKYYELEYYVKLAEDSGFDYTWITDHYNNRNVYSMLTILALKTRTIKLGPGVTNPYHISPALTASAIGTINEISGGRAVLGIGAGDKVTFERIGITWEKPLKRMREAVEIIRQLTEGKAVKYDGEIFKFNGAKLGFKPGSIPIYIGAQGPKMLQLAAELGDGVLINASHPKDFEVAKENIDAGLAKAGKSRDAFDTVAYASMSVDKDRDKARNAARIVVAFIVAGSPPTVLERHGLSEDAVNAVREALNNAFTKGDWGGVAKSVTDEMIDIFSISGTPDDVIERINELSKAGVTQVVAGSPIGPDKKKSIQLIGKEIIPKLK.

The protein belongs to the mer family.

The protein localises to the cytoplasm. The enzyme catalyses 5-methyl-5,6,7,8-tetrahydromethanopterin + oxidized coenzyme F420-(gamma-L-Glu)(n) + H(+) = 5,10-methylenetetrahydromethanopterin + reduced coenzyme F420-(gamma-L-Glu)(n). The protein operates within metabolic intermediate metabolism; lactate oxidation. Functionally, catalyzes the oxidation of methyl-H(4)MPT to methylene-H(4)MPT. The protein is 5,10-methylenetetrahydromethanopterin reductase of Archaeoglobus fulgidus (strain ATCC 49558 / DSM 4304 / JCM 9628 / NBRC 100126 / VC-16).